The following is a 520-amino-acid chain: Peptide chain release factor 3 (520 aa).

The 270-residue stretch at glutamate 8 to threonine 277 folds into the tr-type G domain. Residues serine 17–threonine 24, aspartate 85–histidine 89, and asparagine 139–aspartate 142 each bind GTP.

It belongs to the TRAFAC class translation factor GTPase superfamily. Classic translation factor GTPase family. PrfC subfamily.

It localises to the cytoplasm. Functionally, increases the formation of ribosomal termination complexes and stimulates activities of RF-1 and RF-2. It binds guanine nucleotides and has strong preference for UGA stop codons. It may interact directly with the ribosome. The stimulation of RF-1 and RF-2 is significantly reduced by GTP and GDP, but not by GMP. The polypeptide is Peptide chain release factor 3 (Staphylococcus aureus (strain USA300 / TCH1516)).